The sequence spans 1434 residues: Probable deoxyribonuclease RhsA (1434 aa).

A disordered region spans residues 14–42; that stretch reads AMHAGNRPNPPDDRPQPCRGKPPTSPGKT. 2 helical membrane-spanning segments follow: residues 48-68 and 70-90; these read FLGA…VAAA and VFLV…LAVF. 3 YD repeats span residues 486-521, 592-628, and 847-876; these read YDAA…CADG, DDTG…LGRE, and YDAR…LTEV.

The protein belongs to the RHS/WapA nuclease family.

The protein localises to the membrane. In terms of biological role, toxic component of a toxin-immunity protein module, which functions as a cellular contact-dependent growth inhibition (CDI) system. This protein may be a nuclease that is specifically inhibited by its cognate immunity protein RhsAI. Upon expression of the C-terminus (residues 1284-1434) in E.coli growth is inhibited, cells elongate, nucleoids condense and plasmid DNA is degraded; these effects are blocked specifically by cognate immunity protein RshIA. Cell contact is necessary for growth inhibition. This is Probable deoxyribonuclease RhsA (rhsA) from Dickeya dadantii (strain 3937) (Erwinia chrysanthemi (strain 3937)).